An 857-amino-acid chain; its full sequence is Leucine--tRNA ligase (857 aa).

The 'HIGH' region motif lies at 42 to 52 (PYPSGTLHMGH). The 'KMSKS' region motif lies at 616-620 (KMSKS). Lys619 contacts ATP.

The protein belongs to the class-I aminoacyl-tRNA synthetase family.

It is found in the cytoplasm. The catalysed reaction is tRNA(Leu) + L-leucine + ATP = L-leucyl-tRNA(Leu) + AMP + diphosphate. The chain is Leucine--tRNA ligase from Parasynechococcus marenigrum (strain WH8102).